The sequence spans 400 residues: Acetate kinase (400 aa).

Residue Asn9 participates in Mg(2+) binding. Lys16 serves as a coordination point for ATP. Arg90 contacts substrate. The active-site Proton donor/acceptor is the Asp147. Residues 207-211 (HIGNG), 282-284 (DLR), and 330-334 (GIGEN) each bind ATP. Glu385 is a Mg(2+) binding site.

It belongs to the acetokinase family. In terms of assembly, homodimer. Mg(2+) is required as a cofactor. It depends on Mn(2+) as a cofactor.

The protein localises to the cytoplasm. It carries out the reaction acetate + ATP = acetyl phosphate + ADP. The protein operates within metabolic intermediate biosynthesis; acetyl-CoA biosynthesis; acetyl-CoA from acetate: step 1/2. In terms of biological role, catalyzes the formation of acetyl phosphate from acetate and ATP. Can also catalyze the reverse reaction. The polypeptide is Acetate kinase (Staphylococcus aureus (strain USA300)).